The following is a 362-amino-acid chain: MGIFDELNLPAGVLYGDDVLKLFQYAREKQFAIPACNVTSSSTAVAALEAARDQKAPIILQTSQGGAAFFAGKGIKDSAEKREASVAGAIAAAHYIRSIAPIYGIPVVLHTDHCAKKLLPWLDGMLEEDEKFFKANGVPLFSSHMIDLSEEPVEENISTCVKYLKRMAPMKQWLEMEIGITGGEEDGVDNSEVDNASLYTQPEDIWQIEEAFRPISPYFSIAAGFGNVHGVYAPGNVKLHPELLGKHQAYVSEKLGGKDKKPVFFVFHGGSGSSKEEYREAISNGVVKVNVDTDLQWSYLVGIRDYILNNIDYLRSQVGNPEGPNKPNKKKYDPRVWIREGEKTMKARVEEALKDFNAAGTV.

A D-glyceraldehyde 3-phosphate-binding site is contributed by Ser63. Asp112 (proton donor) is an active-site residue. 4 residues coordinate Zn(2+): His113, Asp147, Glu177, and His229. Position 230 (Gly230) interacts with dihydroxyacetone phosphate. His268 lines the Zn(2+) pocket. Residues 269–271 (GGS) and 290–293 (NVDT) contribute to the dihydroxyacetone phosphate site.

The protein belongs to the class II fructose-bisphosphate aldolase family. Homodimer. The cofactor is Zn(2+).

The catalysed reaction is beta-D-fructose 1,6-bisphosphate = D-glyceraldehyde 3-phosphate + dihydroxyacetone phosphate. It functions in the pathway carbohydrate degradation; glycolysis; D-glyceraldehyde 3-phosphate and glycerone phosphate from D-glucose: step 4/4. Functionally, catalyzes the aldol condensation of dihydroxyacetone phosphate (DHAP or glycerone-phosphate) with glyceraldehyde 3-phosphate (G3P) to form fructose 1,6-bisphosphate (FBP) in gluconeogenesis and the reverse reaction in glycolysis. The polypeptide is Fructose-bisphosphate aldolase (fba) (Neurospora crassa (strain ATCC 24698 / 74-OR23-1A / CBS 708.71 / DSM 1257 / FGSC 987)).